We begin with the raw amino-acid sequence, 213 residues long: MKTSIAIVDYGMGNLRSVAQALKKAEPAADVAIVDTPAAIRAADRVVLPGQGAMPDCMRSLGESGLQEAVIEASRTKPLLGVCVGEQMLFDWSAEGDTKGLGLLPGKVVRFELDGRLQDDGSRFKVPQMGWNRVRQSQPHPLWDGVPDDAYFYFVHSYYVTPDNPAHTVGETAYGAPFTSAVARDNLFATQFHPEKSAEVGLRLYRNFVHWKP.

The Glutamine amidotransferase type-1 domain occupies 4–213; sequence SIAIVDYGMG…LYRNFVHWKP (210 aa). The active-site Nucleophile is cysteine 83. Residues histidine 193 and glutamate 195 contribute to the active site.

As to quaternary structure, heterodimer of HisH and HisF.

The protein localises to the cytoplasm. The enzyme catalyses 5-[(5-phospho-1-deoxy-D-ribulos-1-ylimino)methylamino]-1-(5-phospho-beta-D-ribosyl)imidazole-4-carboxamide + L-glutamine = D-erythro-1-(imidazol-4-yl)glycerol 3-phosphate + 5-amino-1-(5-phospho-beta-D-ribosyl)imidazole-4-carboxamide + L-glutamate + H(+). It carries out the reaction L-glutamine + H2O = L-glutamate + NH4(+). Its pathway is amino-acid biosynthesis; L-histidine biosynthesis; L-histidine from 5-phospho-alpha-D-ribose 1-diphosphate: step 5/9. In terms of biological role, IGPS catalyzes the conversion of PRFAR and glutamine to IGP, AICAR and glutamate. The HisH subunit catalyzes the hydrolysis of glutamine to glutamate and ammonia as part of the synthesis of IGP and AICAR. The resulting ammonia molecule is channeled to the active site of HisF. In Burkholderia lata (strain ATCC 17760 / DSM 23089 / LMG 22485 / NCIMB 9086 / R18194 / 383), this protein is Imidazole glycerol phosphate synthase subunit HisH.